The sequence spans 165 residues: Cytochrome c-type biogenesis protein CcmE (165 aa).

At 1–29 (MSATAEDNARGAKPAGNFARTVSQRKRKR) the chain is on the cytoplasmic side. The helical; Signal-anchor for type II membrane protein transmembrane segment at 30-50 (LFLIGGALAVLAVAVGLMLMA) threads the bilayer. At 51–165 (FSQDIRFFRT…LKEKGVWEGK (115 aa)) the chain is on the periplasmic side. Positions 143 and 147 each coordinate heme.

The protein belongs to the CcmE/CycJ family.

It is found in the cell inner membrane. Heme chaperone required for the biogenesis of c-type cytochromes. Transiently binds heme delivered by CcmC and transfers the heme to apo-cytochromes in a process facilitated by CcmF and CcmH. This chain is Cytochrome c-type biogenesis protein CcmE, found in Brucella anthropi (strain ATCC 49188 / DSM 6882 / CCUG 24695 / JCM 21032 / LMG 3331 / NBRC 15819 / NCTC 12168 / Alc 37) (Ochrobactrum anthropi).